The following is a 91-amino-acid chain: uncharacterized protein (91 aa).

The protein belongs to the UPF0440 family.

This is an uncharacterized protein from Methanothermobacter thermautotrophicus (strain ATCC 29096 / DSM 1053 / JCM 10044 / NBRC 100330 / Delta H) (Methanobacterium thermoautotrophicum).